Consider the following 118-residue polypeptide: Putative pterin-4-alpha-carbinolamine dehydratase (118 aa).

The protein belongs to the pterin-4-alpha-carbinolamine dehydratase family.

The catalysed reaction is (4aS,6R)-4a-hydroxy-L-erythro-5,6,7,8-tetrahydrobiopterin = (6R)-L-erythro-6,7-dihydrobiopterin + H2O. This Stutzerimonas stutzeri (strain A1501) (Pseudomonas stutzeri) protein is Putative pterin-4-alpha-carbinolamine dehydratase.